The following is a 373-amino-acid chain: Histidinol-phosphate aminotransferase (373 aa).

Over residues 1–10 the composition is skewed to polar residues; sequence MTGVPGSSIT. Positions 1–45 are disordered; that stretch reads MTGVPGSSITLDDLPLRDDLRGKSPYGAPQLSVPVRLNTNENPHP. Lys-237 bears the N6-(pyridoxal phosphate)lysine mark.

It belongs to the class-II pyridoxal-phosphate-dependent aminotransferase family. Histidinol-phosphate aminotransferase subfamily. In terms of assembly, homodimer. It depends on pyridoxal 5'-phosphate as a cofactor.

The catalysed reaction is L-histidinol phosphate + 2-oxoglutarate = 3-(imidazol-4-yl)-2-oxopropyl phosphate + L-glutamate. It participates in amino-acid biosynthesis; L-histidine biosynthesis; L-histidine from 5-phospho-alpha-D-ribose 1-diphosphate: step 7/9. The polypeptide is Histidinol-phosphate aminotransferase (Mycolicibacterium vanbaalenii (strain DSM 7251 / JCM 13017 / BCRC 16820 / KCTC 9966 / NRRL B-24157 / PYR-1) (Mycobacterium vanbaalenii)).